The chain runs to 405 residues: L-rhamnonate dehydratase (405 aa).

Residues His-33 and Arg-59 each coordinate substrate. Residues Asp-226, Glu-252, and Glu-280 each coordinate Mg(2+). Catalysis depends on His-329, which acts as the Proton acceptor. Residue Glu-349 participates in substrate binding.

The protein belongs to the mandelate racemase/muconate lactonizing enzyme family. RhamD subfamily. As to quaternary structure, homooctamer; tetramer of dimers. Requires Mg(2+) as cofactor.

The enzyme catalyses L-rhamnonate = 2-dehydro-3-deoxy-L-rhamnonate + H2O. In terms of biological role, catalyzes the dehydration of L-rhamnonate to 2-keto-3-deoxy-L-rhamnonate (KDR). This Escherichia coli O127:H6 (strain E2348/69 / EPEC) protein is L-rhamnonate dehydratase.